We begin with the raw amino-acid sequence, 286 residues long: 2-oxoglutarate synthase subunit KorB (286 aa).

In terms of assembly, heterotetramer of the KorA, KorB, KorC and KorD subunits.

It carries out the reaction 2 oxidized [2Fe-2S]-[ferredoxin] + 2-oxoglutarate + CoA = succinyl-CoA + 2 reduced [2Fe-2S]-[ferredoxin] + CO2 + H(+). The chain is 2-oxoglutarate synthase subunit KorB (korB) from Methanothermobacter thermautotrophicus (strain ATCC 29096 / DSM 1053 / JCM 10044 / NBRC 100330 / Delta H) (Methanobacterium thermoautotrophicum).